Consider the following 503-residue polypeptide: Probable cytosol aminopeptidase (503 aa).

Positions 270 and 275 each coordinate Mn(2+). Lysine 282 is an active-site residue. Residues aspartate 293, aspartate 352, and glutamate 354 each contribute to the Mn(2+) site. The active site involves arginine 356.

Belongs to the peptidase M17 family. Mn(2+) is required as a cofactor.

It is found in the cytoplasm. It carries out the reaction Release of an N-terminal amino acid, Xaa-|-Yaa-, in which Xaa is preferably Leu, but may be other amino acids including Pro although not Arg or Lys, and Yaa may be Pro. Amino acid amides and methyl esters are also readily hydrolyzed, but rates on arylamides are exceedingly low.. The enzyme catalyses Release of an N-terminal amino acid, preferentially leucine, but not glutamic or aspartic acids.. Presumably involved in the processing and regular turnover of intracellular proteins. Catalyzes the removal of unsubstituted N-terminal amino acids from various peptides. The polypeptide is Probable cytosol aminopeptidase (Klebsiella pneumoniae (strain 342)).